A 371-amino-acid polypeptide reads, in one-letter code: Dual-specificity RNA methyltransferase RlmN (371 aa).

E97 (proton acceptor) is an active-site residue. The 239-residue stretch at 103-341 folds into the Radical SAM core domain; that stretch reads DGDRATLCVS…VTVRTTRGDD (239 aa). C110 and C346 are disulfide-bonded. [4Fe-4S] cluster-binding residues include C117, C121, and C124. S-adenosyl-L-methionine-binding positions include 171-172, S203, 225-227, and N303; these read GE and SLH. Residue C346 is the S-methylcysteine intermediate of the active site.

The protein belongs to the radical SAM superfamily. RlmN family. [4Fe-4S] cluster is required as a cofactor.

It localises to the cytoplasm. The enzyme catalyses adenosine(2503) in 23S rRNA + 2 reduced [2Fe-2S]-[ferredoxin] + 2 S-adenosyl-L-methionine = 2-methyladenosine(2503) in 23S rRNA + 5'-deoxyadenosine + L-methionine + 2 oxidized [2Fe-2S]-[ferredoxin] + S-adenosyl-L-homocysteine. It catalyses the reaction adenosine(37) in tRNA + 2 reduced [2Fe-2S]-[ferredoxin] + 2 S-adenosyl-L-methionine = 2-methyladenosine(37) in tRNA + 5'-deoxyadenosine + L-methionine + 2 oxidized [2Fe-2S]-[ferredoxin] + S-adenosyl-L-homocysteine. Functionally, specifically methylates position 2 of adenine 2503 in 23S rRNA and position 2 of adenine 37 in tRNAs. m2A2503 modification seems to play a crucial role in the proofreading step occurring at the peptidyl transferase center and thus would serve to optimize ribosomal fidelity. This Marinomonas sp. (strain MWYL1) protein is Dual-specificity RNA methyltransferase RlmN.